The sequence spans 98 residues: NADH-ubiquinone oxidoreductase chain 4L (98 aa).

Transmembrane regions (helical) follow at residues 1–21, 30–50, and 61–81; these read MSMV…GLLI, LLCL…TILT, and IILL…LVMI.

Belongs to the complex I subunit 4L family. In terms of assembly, core subunit of respiratory chain NADH dehydrogenase (Complex I) which is composed of 45 different subunits.

It localises to the mitochondrion inner membrane. The enzyme catalyses a ubiquinone + NADH + 5 H(+)(in) = a ubiquinol + NAD(+) + 4 H(+)(out). Core subunit of the mitochondrial membrane respiratory chain NADH dehydrogenase (Complex I) which catalyzes electron transfer from NADH through the respiratory chain, using ubiquinone as an electron acceptor. Part of the enzyme membrane arm which is embedded in the lipid bilayer and involved in proton translocation. This chain is NADH-ubiquinone oxidoreductase chain 4L (MT-ND4L), found in Martes americana (American marten).